The primary structure comprises 505 residues: MPRRIKIFDTTLRDGEQSPGASMSLEQKIKMASALERLGVDRIEAGFPVSSPVQFEAVQRVSATVKKAEVVGLARCVQRDIDAAYDALRDAAHPMLHIFIATSPLHREYKLKKSKEEILDTVRECLNYGGKGFSRMEFSPEDASRTEPDYLVEVVKTAIECGATSINIPDTVGYAVPKEFGQLISFLVEQVPQFSDGSVDLSVHCHNDLGLALANSLAAVRSGASQVEVTLNGIGERAGNCPMEELIMSLDVRKDMFDVETGIHTEYLYPTGKLLQSITGLLIPRNKPIFGDNVFVHESGIHQHGVLNKRETYEIMKPERIGRSSETIIMGRHSGKHALEDKLSQYNIKLTRQQFEDVFARFTAIADKKKEVYDEDLFSIVGTVLGGVVKGFSLLYFHTFTGNSLIPGATVKVRSEAGEKVASATGDGPVDAVFNAIDECVGINARLKEYIIHAIGSGKDAQGEVKLEVEIEGATYGGKASSTDIIEASAMAYLNAVNRFELRKR.

Residues 5–269 (IKIFDTTLRD…ETGIHTEYLY (265 aa)) enclose the Pyruvate carboxyltransferase domain. Mn(2+) contacts are provided by aspartate 14, histidine 204, histidine 206, and asparagine 240. The tract at residues 393-505 (SLLYFHTFTG…AVNRFELRKR (113 aa)) is regulatory domain.

The protein belongs to the alpha-IPM synthase/homocitrate synthase family. LeuA type 1 subfamily. As to quaternary structure, homodimer. The cofactor is Mn(2+).

It localises to the cytoplasm. The enzyme catalyses 3-methyl-2-oxobutanoate + acetyl-CoA + H2O = (2S)-2-isopropylmalate + CoA + H(+). Its pathway is amino-acid biosynthesis; L-leucine biosynthesis; L-leucine from 3-methyl-2-oxobutanoate: step 1/4. Catalyzes the condensation of the acetyl group of acetyl-CoA with 3-methyl-2-oxobutanoate (2-ketoisovalerate) to form 3-carboxy-3-hydroxy-4-methylpentanoate (2-isopropylmalate). This chain is 2-isopropylmalate synthase, found in Sediminispirochaeta smaragdinae (strain DSM 11293 / JCM 15392 / SEBR 4228) (Spirochaeta smaragdinae).